A 222-amino-acid polypeptide reads, in one-letter code: UPF0758 protein YicR (222 aa).

The MPN domain maps to 100 to 222; it reads PLLSPEMTRE…YVSFAERGWI (123 aa). Zn(2+) contacts are provided by His171, His173, and Asp184. Positions 171 to 184 match the JAMM motif motif; sequence HNHPSGCAEPSKAD.

It belongs to the UPF0758 family. YicR subfamily.

This Escherichia coli O9:H4 (strain HS) protein is UPF0758 protein YicR.